We begin with the raw amino-acid sequence, 216 residues long: Cytochrome c biogenesis ATP-binding export protein CcmA (216 aa).

Positions 11 to 216 (LSANELTCIR…RKITLDYRFV (206 aa)) constitute an ABC transporter domain. 43 to 50 (GPNGAGKT) provides a ligand contact to ATP.

It belongs to the ABC transporter superfamily. CcmA exporter (TC 3.A.1.107) family. In terms of assembly, the complex is composed of two ATP-binding proteins (CcmA) and two transmembrane proteins (CcmB).

It localises to the cell inner membrane. The catalysed reaction is heme b(in) + ATP + H2O = heme b(out) + ADP + phosphate + H(+). Its function is as follows. Part of the ABC transporter complex CcmAB involved in the biogenesis of c-type cytochromes; once thought to export heme, this seems not to be the case, but its exact role is uncertain. Responsible for energy coupling to the transport system. In Shewanella frigidimarina (strain NCIMB 400), this protein is Cytochrome c biogenesis ATP-binding export protein CcmA.